A 921-amino-acid chain; its full sequence is Isoleucine--tRNA ligase (921 aa).

The 'HIGH' region motif lies at 57–67 (PYANGDIHMGH). Glutamate 552 is a binding site for L-isoleucyl-5'-AMP. Positions 593–597 (KMSKS) match the 'KMSKS' region motif. Lysine 596 contacts ATP. Zn(2+)-binding residues include cysteine 888, cysteine 891, cysteine 908, and cysteine 911.

This sequence belongs to the class-I aminoacyl-tRNA synthetase family. IleS type 1 subfamily. Monomer. The cofactor is Zn(2+).

Its subcellular location is the cytoplasm. It carries out the reaction tRNA(Ile) + L-isoleucine + ATP = L-isoleucyl-tRNA(Ile) + AMP + diphosphate. Functionally, catalyzes the attachment of isoleucine to tRNA(Ile). As IleRS can inadvertently accommodate and process structurally similar amino acids such as valine, to avoid such errors it has two additional distinct tRNA(Ile)-dependent editing activities. One activity is designated as 'pretransfer' editing and involves the hydrolysis of activated Val-AMP. The other activity is designated 'posttransfer' editing and involves deacylation of mischarged Val-tRNA(Ile). This Bacillus cereus (strain AH187) protein is Isoleucine--tRNA ligase.